We begin with the raw amino-acid sequence, 144 residues long: MHLNTLKPAEGAKKLAKRKGRGQGSGNGKMAGRGHKGQKSRSGGMPKIGFEGGQMPLQRRLPKVGFTSRKSAYAAEIRLDVLSSVDSDVIDLPALKAANLVSEKIKTVKVINSGEMKKAVKISGLKVTAGAKATIEAAGGSVEV.

A disordered region spans residues M1 to Q54. Positions G22–A31 are enriched in gly residues.

The protein belongs to the universal ribosomal protein uL15 family. Part of the 50S ribosomal subunit.

In terms of biological role, binds to the 23S rRNA. The protein is Large ribosomal subunit protein uL15 of Hydrogenovibrio crunogenus (strain DSM 25203 / XCL-2) (Thiomicrospira crunogena).